The following is a 262-amino-acid chain: WUSCHEL-related homeobox 11 (262 aa).

Basic and acidic residues predominate over residues 1–11; the sequence is MDGGHSPDRHA. Disordered stretches follow at residues 1–21 and 79–115; these read MDGG…PVRS and RRRQ…GHAG. The segment at residues 18 to 82 is a DNA-binding region (homeobox); it reads PVRSRWTPKP…NRRSRSRRRQ (65 aa). The segment covering 84–112 has biased composition (low complexity); sequence QLQAQAQAAAAAASSGSPPTASSGGLAPG.

This sequence belongs to the WUS homeobox family. As to quaternary structure, interacts with ERF3.

It localises to the nucleus. Functionally, transcription factor which may be involved in developmental processes. Promotes the development of crown roots (both initiation and elongation), main components of the fibrous root system, by regulating the expression of genes required for crown root development and hormone-responsive genes involved in cytokinin (e.g. RR1, RR2, RR3 and RR4) and auxin (e.g. IAA5, IAA11, IAA23 and IAA31) signaling. The sequence is that of WUSCHEL-related homeobox 11 from Oryza sativa subsp. indica (Rice).